Reading from the N-terminus, the 204-residue chain is Cardiotrophin-2 (204 aa).

An N-terminal signal peptide occupies residues 1-22; the sequence is MYCLLATPLCLLSLLLPPLSPA. Asparagine 44 carries an N-linked (GlcNAc...) asparagine glycan.

The protein belongs to the IL-6 superfamily. Binds to tripartite CNTF receptor complex consisting of CNTF alpha chain, LIFR and IL6ST (in vitro). Not detected in adult tissues.

It localises to the secreted. Functionally, increases the platelet count associated with splenomegaly. May have an important role in neuronal precursor development and maturation. This Mus musculus (Mouse) protein is Cardiotrophin-2 (Ctf2).